A 456-amino-acid chain; its full sequence is Frizzled/smoothened-like sans CRD protein F (456 aa).

The first 30 residues, 1–30, serve as a signal peptide directing secretion; that stretch reads MIFNNLKNQNKIINFLIIFYFLSFLKQIES. Topologically, residues 31-92 are extracellular; that stretch reads QSINITSSSS…PFFTINEWNK (62 aa). Asparagine 34, asparagine 52, and asparagine 70 each carry an N-linked (GlcNAc...) asparagine glycan. A helical membrane pass occupies residues 93–113; it reads FLNMSLVMGTISFFSGLFLLV. Residues 114-127 lie on the Cytoplasmic side of the membrane; it reads TYSPIVNKTHNRHT. The helical transmembrane segment at 128–148 threads the bilayer; the sequence is IGVMCMSFGVCLAMCSDMWNF. At 149-174 the chain is on the extracellular side; that stretch reads GSNFTEKSICPSPGQYLSTSNARCLS. A glycan (N-linked (GlcNAc...) asparagine) is linked at asparagine 151. A helical membrane pass occupies residues 175–195; sequence SGIFLQFGGVFGFLNWTLLSF. At 196–211 the chain is on the cytoplasmic side; that stretch reads DLFMNIKGIITKNYDK. A helical membrane pass occupies residues 212 to 232; sequence YYVSGTFIIAIIFTFVPIVND. Topologically, residues 233–252 are extracellular; it reads QYSMSYIGLGCWLGSAMYQL. Residues 253–273 traverse the membrane as a helical segment; it reads IFFWILLSICLIVSSVFIILI. The Cytoplasmic segment spans residues 274–297; the sequence is LKEVYIIIKLSKQKTSLKGNIRPL. Residues 298 to 318 traverse the membrane as a helical segment; it reads ICISITGFAFFYMFFYYISIV. Over 319-354 the chain is Extracellular; that stretch reads VEGDYYERVLNEYTDCLMDPTKDISECKSPRMSVAS. Residues 355–375 form a helical membrane-spanning segment; the sequence is EFVFLLCLRLLGIGAFIFYGI. Residues 376 to 456 lie on the Cytoplasmic side of the membrane; sequence NNKVKKIWLN…ESSLNSVDEI (81 aa). Residues 403–422 are disordered; that stretch reads ADNDKSNSNGSKVLYRTNNT.

It belongs to the G-protein coupled receptor Fz/Smo family.

It localises to the membrane. The protein is Frizzled/smoothened-like sans CRD protein F (fscF) of Dictyostelium discoideum (Social amoeba).